The following is a 141-amino-acid chain: Small ribosomal subunit protein eS12 (141 aa).

Belongs to the eukaryotic ribosomal protein eS12 family. In terms of assembly, component of the small ribosomal subunit. Mature ribosomes consist of a small (40S) and a large (60S) subunit. The 40S subunit contains about 32 different proteins and 1 molecule of RNA (18S). The 60S subunit contains about 42 different proteins and 3 molecules of RNA (28S, 5.8S and 5S).

It is found in the cytoplasm. Component of the ribosome, a large ribonucleoprotein complex responsible for the synthesis of proteins in the cell. The small ribosomal subunit (SSU) binds messenger RNAs (mRNAs) and translates the encoded message by selecting cognate aminoacyl-transfer RNA (tRNA) molecules. The large subunit (LSU) contains the ribosomal catalytic site termed the peptidyl transferase center (PTC), which catalyzes the formation of peptide bonds, thereby polymerizing the amino acids delivered by tRNAs into a polypeptide chain. The nascent polypeptides leave the ribosome through a tunnel in the LSU and interact with protein factors that function in enzymatic processing, targeting, and the membrane insertion of nascent chains at the exit of the ribosomal tunnel. In Plasmodium falciparum (isolate 3D7), this protein is Small ribosomal subunit protein eS12.